Consider the following 398-residue polypeptide: Elongation factor Tu (398 aa).

The tr-type G domain occupies lysine 10 to asparagine 207. The tract at residues glycine 19–threonine 26 is G1. Glycine 19–threonine 26 contributes to the GTP binding site. Threonine 26 lines the Mg(2+) pocket. The tract at residues glycine 60–serine 64 is G2. The tract at residues aspartate 81–glycine 84 is G3. GTP-binding positions include aspartate 81–histidine 85 and asparagine 136–aspartate 139. Positions asparagine 136–aspartate 139 are G4. Residues serine 174–leucine 176 are G5.

The protein belongs to the TRAFAC class translation factor GTPase superfamily. Classic translation factor GTPase family. EF-Tu/EF-1A subfamily. Monomer.

It localises to the cytoplasm. It carries out the reaction GTP + H2O = GDP + phosphate + H(+). Functionally, GTP hydrolase that promotes the GTP-dependent binding of aminoacyl-tRNA to the A-site of ribosomes during protein biosynthesis. The chain is Elongation factor Tu from Carsonella ruddii (strain PV).